The chain runs to 191 residues: Thymidylate kinase (191 aa).

An ATP-binding site is contributed by 7-14; that stretch reads GVDGAGKS.

The protein belongs to the thymidylate kinase family.

The catalysed reaction is dTMP + ATP = dTDP + ADP. Functionally, phosphorylation of dTMP to form dTDP in both de novo and salvage pathways of dTTP synthesis. The protein is Thymidylate kinase (tmk) of Helicobacter pylori (strain ATCC 700392 / 26695) (Campylobacter pylori).